Consider the following 87-residue polypeptide: UPF0250 protein ECA1299 (87 aa).

The protein belongs to the UPF0250 family.

In Pectobacterium atrosepticum (strain SCRI 1043 / ATCC BAA-672) (Erwinia carotovora subsp. atroseptica), this protein is UPF0250 protein ECA1299.